We begin with the raw amino-acid sequence, 178 residues long: Caveolin-1 (178 aa).

An N-acetylserine modification is found at Ser-2. The residue at position 2 (Ser-2) is a Phosphoserine. The interval Ser-2 to Val-94 is required for homooligomerization. Topologically, residues Ser-2–Ser-104 are cytoplasmic. Residue Lys-5 is modified to N6-acetyllysine; alternate. Residue Lys-5 forms a Glycyl lysine isopeptide (Lys-Gly) (interchain with G-Cter in ubiquitin); alternate linkage. A Phosphotyrosine modification is found at Tyr-6. Ser-9 bears the Phosphoserine mark. Tyr-14 is modified (phosphotyrosine; by ABL1). Residue Tyr-25 is modified to Phosphotyrosine. Glycyl lysine isopeptide (Lys-Gly) (interchain with G-Cter in ubiquitin) cross-links involve residues Lys-26, Lys-30, Lys-39, Lys-47, and Lys-57. An interaction with CAVIN3 region spans residues Asp-82–Val-94. Positions Gly-105–Leu-125 form an intramembrane region, helical. The Cytoplasmic portion of the chain corresponds to His-126 to Ile-178. The interacts with SPRY1, SPRY2, SPRY3 and SPRY4 stretch occupies residues Val-131–Gln-142. Residues Cys-133, Cys-143, and Cys-156 are each lipidated (S-palmitoyl cysteine). Residues Ser-149–Phe-160 form an interacts with SPRY1, SPRY2, and SPRY4 region. The interval Phe-167 to Ile-178 is interacts with SPRY1, SPRY2, SPRY3 and SPRY4.

Belongs to the caveolin family. As to quaternary structure, homooligomer. Interacts with GLIPR2. Interacts with NOSTRIN. Interacts with SNAP25 and STX1A. Interacts (via the N-terminus) with DPP4; the interaction is direct. Interacts with CTNNB1, CDH1 and JUP. Interacts with PACSIN2; this interaction induces membrane tubulation. Interacts with SLC7A9. Interacts with BMX and BTK. Interacts with TGFBR1. Interacts with CAVIN3 (via leucine-zipper domain) in a cholesterol-sensitive manner. Interacts with CAVIN1. Interacts with EHD2 in a cholesterol-dependent manner. Forms a ternary complex with UBXN6 and VCP; mediates CAV1 targeting to lysosomes for degradation. Interacts with ABCG1; this interaction regulates ABCG1-mediated cholesterol efflux. Interacts with NEU3; this interaction enhances NEU3 sialidase activity within caveola. Interacts (via C-terminus) with SPRY1, SPRY2 (via C-terminus), SPRY3, and SPRY4. Interacts with IGFBP5; this interaction allows trafficking of IGFBP5 from the plasma membrane to the nucleus. In terms of processing, phosphorylated at Tyr-14 by ABL1 in response to oxidative stress. Post-translationally, ubiquitinated. Undergo monoubiquitination and multi- and/or polyubiquitination. Monoubiquitination of N-terminal lysines promotes integration in a ternary complex with UBXN6 and VCP which promotes oligomeric CAV1 targeting to lysosomes for degradation. Ubiquitinated by ZNRF1; leading to degradation and modulation of the TLR4-mediated immune response.

It is found in the golgi apparatus membrane. The protein resides in the cell membrane. The protein localises to the membrane. It localises to the caveola. Its subcellular location is the membrane raft. May act as a scaffolding protein within caveolar membranes. Forms a stable heterooligomeric complex with CAV2 that targets to lipid rafts and drives caveolae formation. Mediates the recruitment of CAVIN proteins (CAVIN1/2/3/4) to the caveolae. Interacts directly with G-protein alpha subunits and can functionally regulate their activity. Involved in the costimulatory signal essential for T-cell receptor (TCR)-mediated T-cell activation. Its binding to DPP4 induces T-cell proliferation and NF-kappa-B activation in a T-cell receptor/CD3-dependent manner. Recruits CTNNB1 to caveolar membranes and may regulate CTNNB1-mediated signaling through the Wnt pathway. Negatively regulates TGFB1-mediated activation of SMAD2/3 by mediating the internalization of TGFBR1 from membrane rafts leading to its subsequent degradation. Binds 20(S)-hydroxycholesterol (20(S)-OHC). The polypeptide is Caveolin-1 (CAV1) (Echinops telfairi (Lesser hedgehog tenrec)).